Reading from the N-terminus, the 386-residue chain is Prostatic acid phosphatase (386 aa).

The signal sequence occupies residues 1–32 (MRAAPLLLARAASLSLGFLFLLFFWLDRSVLA). Residue Arg43 coordinates substrate. His44 functions as the Nucleophile in the catalytic mechanism. Arg47 serves as a coordination point for substrate. Asn94 is a glycosylation site (N-linked (GlcNAc...) asparagine). Arg111 is a binding site for substrate. 3 disulfides stabilise this stretch: Cys161–Cys372, Cys215–Cys313, and Cys347–Cys351. Asn220 carries an N-linked (GlcNAc...) asparagine glycan. Substrate is bound at residue His289. Asp290 functions as the Proton donor in the catalytic mechanism. Residue Asn333 is glycosylated (N-linked (GlcNAc...) asparagine).

Belongs to the histidine acid phosphatase family. Homodimer; dimer formation is required for phosphatase activity. In terms of processing, N-glycosylated. High mannose content, partially sialylated and fucosylated biantennary complex. Also fucosylated with partially sialylated triantennary complex oligosaccharides. Post-translationally, proteolytically cleaved in seminal fluid to produce several peptides. Peptide PAPf39, the most prominent, forms amyloid beta-sheet fibrils, SEVI (semen-derived enhancer of viral infection). Highly expressed in the prostate, restricted to glandular and ductal epithelial cells. Also expressed in bladder, kidney, pancreas, lung, cervix, testis and ovary. Weak expression in a subset of pancreatic islet cells, squamous epithelia, the pilosebaceous unit, colonic neuroendocrine cells and skin adnexal structures. Low expression in prostate carcinoma cells and tissues. As to expression, widely expressed. Expressed in the sarcolemma of skeletal muscle.

It localises to the secreted. The protein localises to the cell membrane. It is found in the lysosome membrane. Its subcellular location is the nucleus. The protein resides in the cytoplasm. It localises to the cytosol. It catalyses the reaction a phosphate monoester + H2O = an alcohol + phosphate. The catalysed reaction is 1-(9Z-octadecenoyl)-sn-glycero-3-phosphate + H2O = 1-(9Z-octadecenoyl)-sn-glycerol + phosphate. It carries out the reaction a ribonucleoside 5'-phosphate + H2O = a ribonucleoside + phosphate. The enzyme catalyses O-phospho-L-tyrosyl-[protein] + H2O = L-tyrosyl-[protein] + phosphate. Phosphatase activity inhibited by L(+)-tartrate, and by its derivative, alpha-benzylaminobenzylphosphonic acid. Functionally, a non-specific tyrosine phosphatase that dephosphorylates a diverse number of substrates under acidic conditions (pH 4-6) including alkyl, aryl, and acyl orthophosphate monoesters and phosphorylated proteins. Has lipid phosphatase activity and inactivates lysophosphatidic acid in seminal plasma. Its function is as follows. Tyrosine phosphatase that acts as a tumor suppressor of prostate cancer through dephosphorylation of ERBB2 and deactivation of MAPK-mediated signaling. In addition to its tyrosine phosphatase activity has ecto-5'-nucleotidase activity in dorsal root ganglion (DRG) neurons. Generates adenosine from AMP which acts as a pain suppressor. (Microbial infection) Forms amyloid beta-sheet fibrils in semen. These fibrils, termed SEVI (semen-derived enhancer of viral infection) capture HIV virions, attach them to target cells and enhance infection. SEVI amyloid fibrils are degraded by polyphenol epigallocatechin-3-gallate (EGCG), a constituent of green tea. Target cell attachment and enhancement of HIV infection is inhibited by surfen. Also similarly boosts XMRV (xenotropic murine leukemia virus-related virus) infection. The sequence is that of Prostatic acid phosphatase from Homo sapiens (Human).